The sequence spans 94 residues: Co-chaperonin GroES (94 aa).

It belongs to the GroES chaperonin family. As to quaternary structure, heptamer of 7 subunits arranged in a ring. Interacts with the chaperonin GroEL.

The protein localises to the cytoplasm. Functionally, together with the chaperonin GroEL, plays an essential role in assisting protein folding. The GroEL-GroES system forms a nano-cage that allows encapsulation of the non-native substrate proteins and provides a physical environment optimized to promote and accelerate protein folding. GroES binds to the apical surface of the GroEL ring, thereby capping the opening of the GroEL channel. This Streptococcus mitis protein is Co-chaperonin GroES.